The sequence spans 396 residues: MAATSNSGEDPTLSYHHRSPFRFELLQSISSSDPRYSSLTPSSTNRPFSVSQSLPNSQLSPLISPHWDDSYSQITQKVQKSRKNHRIQLGSIANMSGGESIDIAKVIVKQESSPQNVKRVYNKSKGGTKLLKAGKRMANGEVQNGGLNGASINCRYDSSLGLLTKKFVKLIQEAEDGTLDLNYCAVVLEVQKRRIYDITNVLEGIGLIEKTTKNHIRWKGADNLGQKDLGDQISRLKSEVESMQSEESRLDDLIRERQEALRSLEEDDYCRRYMFMTEEDITSLPRFQNQTLLAIKAPTASYIEVPDPDEMSFPQQYRMVIRSRMGPIDVYLLSKYKGDSAETSDKLGNESDQKAPVGVDTPSLKIVTSDTDLKADYWFESDAEVSLTDLWSNFNS.

The segment covering 34–48 (PRYSSLTPSSTNRPF) has biased composition (polar residues). The disordered stretch occupies residues 34–57 (PRYSSLTPSSTNRPFSVSQSLPNS). Residues 155 to 220 (RYDSSLGLLT…TTKNHIRWKG (66 aa)) mediate DNA binding. Residues 226–268 (QKDLGDQISRLKSEVESMQSEESRLDDLIRERQEALRSLEEDD) are a coiled coil. The leucine-zipper stretch occupies residues 236-264 (LKSEVESMQSEESRLDDLIRERQEALRSL). The segment at 376-391 (DYWFESDAEVSLTDLW) is retinoblastoma protein binding.

Belongs to the E2F/DP family. Heterodimer with DP proteins. Interacts preferentially with DPB, but also with DPA. No interaction with DPB when phosphorylated. Interacts with SKP2A, CDKA-1 and maize retinoblastoma-related protein RBR1. Component of a DREAM-like complex which modulates a variety of developmentally regulated genes and of the mitotic genes in proliferating and differentiated cells. Interacts with MYB3R3 at later stages of leaves development. In terms of processing, phosphorylated by cyclin-dependent kinase. Phosphorylation is necessary to target E2FC for proteolysis. As to expression, expressed in meristematic areas, vascular tissues, apical part of the roots, cotyledons, upper region of the hypocotyls, trichomes, young flower buds and pollen grains.

The protein resides in the cytoplasm. Its function is as follows. Involved in transcriptional repression. May act by repressing E2F-regulated genes in mature differentiated cells, but is not an antagonist of E2FA. Restricts cell division and is involved in the coordination between cell proliferation and endoreduplication during development. May play a role during the transition from skotomorphogenesis to photomorphogenesis. Regulated by phosphorylation-dependent proteolysis via the protein-ubiquitin ligase SCF(SKP2A) complex. This Arabidopsis thaliana (Mouse-ear cress) protein is Transcription factor E2FC (E2FC).